The primary structure comprises 181 residues: Adenylate kinase (181 aa).

ATP is bound at residue 10-15; that stretch reads GAGKGT. The tract at residues 30–59 is NMP; that stretch reads STGDLFRANIGEGTPLGLEAKSYIDAGKLV. Residues Thr-31, Arg-36, 57–59, 85–88, and Gln-92 contribute to the AMP site; these read KLV and GFPR. Residues 126 to 132 are LID; it reads ARGRADD. Arg-127 contributes to the ATP binding site. Arg-129 and Arg-140 together coordinate AMP. Gly-166 is an ATP binding site.

It belongs to the adenylate kinase family. As to quaternary structure, monomer.

Its subcellular location is the cytoplasm. It carries out the reaction AMP + ATP = 2 ADP. It functions in the pathway purine metabolism; AMP biosynthesis via salvage pathway; AMP from ADP: step 1/1. Functionally, catalyzes the reversible transfer of the terminal phosphate group between ATP and AMP. Plays an important role in cellular energy homeostasis and in adenine nucleotide metabolism. The chain is Adenylate kinase from Corynebacterium aurimucosum (strain ATCC 700975 / DSM 44827 / CIP 107346 / CN-1) (Corynebacterium nigricans).